The primary structure comprises 220 residues: Deoxyribose-phosphate aldolase 1 (220 aa).

Residue Asp-89 is the Proton donor/acceptor of the active site. Lys-151 acts as the Schiff-base intermediate with acetaldehyde in catalysis. The active-site Proton donor/acceptor is the Lys-180.

This sequence belongs to the DeoC/FbaB aldolase family. DeoC type 1 subfamily.

The protein localises to the cytoplasm. It carries out the reaction 2-deoxy-D-ribose 5-phosphate = D-glyceraldehyde 3-phosphate + acetaldehyde. The protein operates within carbohydrate degradation; 2-deoxy-D-ribose 1-phosphate degradation; D-glyceraldehyde 3-phosphate and acetaldehyde from 2-deoxy-alpha-D-ribose 1-phosphate: step 2/2. In terms of biological role, catalyzes a reversible aldol reaction between acetaldehyde and D-glyceraldehyde 3-phosphate to generate 2-deoxy-D-ribose 5-phosphate. This chain is Deoxyribose-phosphate aldolase 1, found in Staphylococcus aureus (strain MRSA252).